Consider the following 430-residue polypeptide: Tol-Pal system protein TolB (430 aa).

A signal peptide spans 1 to 21 (MKQALRVAFGFLILWASVLHA).

The protein belongs to the TolB family. As to quaternary structure, the Tol-Pal system is composed of five core proteins: the inner membrane proteins TolA, TolQ and TolR, the periplasmic protein TolB and the outer membrane protein Pal. They form a network linking the inner and outer membranes and the peptidoglycan layer.

It localises to the periplasm. Its function is as follows. Part of the Tol-Pal system, which plays a role in outer membrane invagination during cell division and is important for maintaining outer membrane integrity. TolB occupies a key intermediary position in the Tol-Pal system because it communicates directly with both membrane-embedded components, Pal in the outer membrane and TolA in the inner membrane. This chain is Tol-Pal system protein TolB, found in Escherichia coli O8 (strain IAI1).